The following is a 337-amino-acid chain: Probable arabinose 5-phosphate isomerase (337 aa).

One can recognise an SIS domain in the interval V58 to F201. Residues G92 to T93, H99, H105, K131 to G140, T165 to E167, T237, and D290 contribute to the substrate site. H99 serves as a coordination point for Zn(2+). The region spanning M227–L284 is the CBS 1 domain. A CBS 2 domain is found at M292–S337.

The protein belongs to the SIS family. GutQ/KpsF subfamily.

It carries out the reaction D-arabinose 5-phosphate = D-ribulose 5-phosphate. In terms of biological role, catalyzes the reversible aldol-ketol isomerization between D-ribulose 5-phosphate (Ru5P) and D-arabinose 5-phosphate (A5P). The protein is Probable arabinose 5-phosphate isomerase of Haemophilus influenzae (strain ATCC 51907 / DSM 11121 / KW20 / Rd).